Reading from the N-terminus, the 89-residue chain is Small ribosomal subunit protein uS15 (89 aa).

It belongs to the universal ribosomal protein uS15 family. Part of the 30S ribosomal subunit. Forms a bridge to the 50S subunit in the 70S ribosome, contacting the 23S rRNA.

Functionally, one of the primary rRNA binding proteins, it binds directly to 16S rRNA where it helps nucleate assembly of the platform of the 30S subunit by binding and bridging several RNA helices of the 16S rRNA. Its function is as follows. Forms an intersubunit bridge (bridge B4) with the 23S rRNA of the 50S subunit in the ribosome. This Shewanella sp. (strain ANA-3) protein is Small ribosomal subunit protein uS15.